We begin with the raw amino-acid sequence, 296 residues long: Tyrosine recombinase XerC (296 aa).

Positions 2-85 (ADQASWLERF…ALKQFGQFLL (84 aa)) constitute a Core-binding (CB) domain. The region spanning 106–285 (TLPKNLDPDS…DFQHLAKVYD (180 aa)) is the Tyr recombinase domain. Catalysis depends on residues Arg145, Lys169, His237, Arg240, and His263. Catalysis depends on Tyr272, which acts as the O-(3'-phospho-DNA)-tyrosine intermediate.

This sequence belongs to the 'phage' integrase family. XerC subfamily. In terms of assembly, forms a cyclic heterotetrameric complex composed of two molecules of XerC and two molecules of XerD.

It localises to the cytoplasm. Site-specific tyrosine recombinase, which acts by catalyzing the cutting and rejoining of the recombining DNA molecules. The XerC-XerD complex is essential to convert dimers of the bacterial chromosome into monomers to permit their segregation at cell division. It also contributes to the segregational stability of plasmids. This Shewanella amazonensis (strain ATCC BAA-1098 / SB2B) protein is Tyrosine recombinase XerC.